The chain runs to 177 residues: Crossover junction endodeoxyribonuclease RuvC (177 aa).

Active-site residues include D7, E68, and D141. Positions 7, 68, and 141 each coordinate Mg(2+).

The protein belongs to the RuvC family. In terms of assembly, homodimer which binds Holliday junction (HJ) DNA. The HJ becomes 2-fold symmetrical on binding to RuvC with unstacked arms; it has a different conformation from HJ DNA in complex with RuvA. In the full resolvosome a probable DNA-RuvA(4)-RuvB(12)-RuvC(2) complex forms which resolves the HJ. The cofactor is Mg(2+).

Its subcellular location is the cytoplasm. The enzyme catalyses Endonucleolytic cleavage at a junction such as a reciprocal single-stranded crossover between two homologous DNA duplexes (Holliday junction).. In terms of biological role, the RuvA-RuvB-RuvC complex processes Holliday junction (HJ) DNA during genetic recombination and DNA repair. Endonuclease that resolves HJ intermediates. Cleaves cruciform DNA by making single-stranded nicks across the HJ at symmetrical positions within the homologous arms, yielding a 5'-phosphate and a 3'-hydroxyl group; requires a central core of homology in the junction. The consensus cleavage sequence is 5'-(A/T)TT(C/G)-3'. Cleavage occurs on the 3'-side of the TT dinucleotide at the point of strand exchange. HJ branch migration catalyzed by RuvA-RuvB allows RuvC to scan DNA until it finds its consensus sequence, where it cleaves and resolves the cruciform DNA. This Nocardioides sp. (strain ATCC BAA-499 / JS614) protein is Crossover junction endodeoxyribonuclease RuvC.